The following is a 155-amino-acid chain: Endoribonuclease YbeY (155 aa).

H114, H118, and H124 together coordinate Zn(2+).

It belongs to the endoribonuclease YbeY family. Requires Zn(2+) as cofactor.

It localises to the cytoplasm. In terms of biological role, single strand-specific metallo-endoribonuclease involved in late-stage 70S ribosome quality control and in maturation of the 3' terminus of the 16S rRNA. In Citrobacter koseri (strain ATCC BAA-895 / CDC 4225-83 / SGSC4696), this protein is Endoribonuclease YbeY.